Reading from the N-terminus, the 198-residue chain is Adenine phosphoribosyltransferase (198 aa).

The protein belongs to the purine/pyrimidine phosphoribosyltransferase family. In terms of assembly, homodimer.

The protein localises to the cytoplasm. It catalyses the reaction AMP + diphosphate = 5-phospho-alpha-D-ribose 1-diphosphate + adenine. It participates in purine metabolism; AMP biosynthesis via salvage pathway; AMP from adenine: step 1/1. Catalyzes a salvage reaction resulting in the formation of AMP, that is energically less costly than de novo synthesis. The protein is Adenine phosphoribosyltransferase of Serratia proteamaculans (strain 568).